The primary structure comprises 322 residues: Phosphatidylserine decarboxylase proenzyme (322 aa).

Catalysis depends on charge relay system; for autoendoproteolytic cleavage activity residues aspartate 90, histidine 147, and serine 254. Residue serine 254 is the Schiff-base intermediate with substrate; via pyruvic acid; for decarboxylase activity of the active site. At serine 254 the chain carries Pyruvic acid (Ser); by autocatalysis.

This sequence belongs to the phosphatidylserine decarboxylase family. PSD-B subfamily. Prokaryotic type I sub-subfamily. In terms of assembly, heterodimer of a large membrane-associated beta subunit and a small pyruvoyl-containing alpha subunit. It depends on pyruvate as a cofactor. Post-translationally, is synthesized initially as an inactive proenzyme. Formation of the active enzyme involves a self-maturation process in which the active site pyruvoyl group is generated from an internal serine residue via an autocatalytic post-translational modification. Two non-identical subunits are generated from the proenzyme in this reaction, and the pyruvate is formed at the N-terminus of the alpha chain, which is derived from the carboxyl end of the proenzyme. The autoendoproteolytic cleavage occurs by a canonical serine protease mechanism, in which the side chain hydroxyl group of the serine supplies its oxygen atom to form the C-terminus of the beta chain, while the remainder of the serine residue undergoes an oxidative deamination to produce ammonia and the pyruvoyl prosthetic group on the alpha chain. During this reaction, the Ser that is part of the protease active site of the proenzyme becomes the pyruvoyl prosthetic group, which constitutes an essential element of the active site of the mature decarboxylase.

It is found in the cell membrane. It carries out the reaction a 1,2-diacyl-sn-glycero-3-phospho-L-serine + H(+) = a 1,2-diacyl-sn-glycero-3-phosphoethanolamine + CO2. The protein operates within phospholipid metabolism; phosphatidylethanolamine biosynthesis; phosphatidylethanolamine from CDP-diacylglycerol: step 2/2. Functionally, catalyzes the formation of phosphatidylethanolamine (PtdEtn) from phosphatidylserine (PtdSer). This is Phosphatidylserine decarboxylase proenzyme from Shigella dysenteriae serotype 1 (strain Sd197).